Reading from the N-terminus, the 225-residue chain is NAD(P)H-quinone oxidoreductase subunit K, chloroplastic (225 aa).

Positions 43, 44, 108, and 139 each coordinate [4Fe-4S] cluster.

The protein belongs to the complex I 20 kDa subunit family. As to quaternary structure, NDH is composed of at least 16 different subunits, 5 of which are encoded in the nucleus. It depends on [4Fe-4S] cluster as a cofactor.

Its subcellular location is the plastid. It is found in the chloroplast thylakoid membrane. The enzyme catalyses a plastoquinone + NADH + (n+1) H(+)(in) = a plastoquinol + NAD(+) + n H(+)(out). The catalysed reaction is a plastoquinone + NADPH + (n+1) H(+)(in) = a plastoquinol + NADP(+) + n H(+)(out). NDH shuttles electrons from NAD(P)H:plastoquinone, via FMN and iron-sulfur (Fe-S) centers, to quinones in the photosynthetic chain and possibly in a chloroplast respiratory chain. The immediate electron acceptor for the enzyme in this species is believed to be plastoquinone. Couples the redox reaction to proton translocation, and thus conserves the redox energy in a proton gradient. The sequence is that of NAD(P)H-quinone oxidoreductase subunit K, chloroplastic from Draba nemorosa (Woodland whitlowgrass).